A 319-amino-acid polypeptide reads, in one-letter code: Acetyl-coenzyme A carboxylase carboxyl transferase subunit alpha (319 aa).

A CoA carboxyltransferase C-terminal domain is found at 35 to 296; that stretch reads DLEKEIKQLE…KQRLLEQLKE (262 aa).

Belongs to the AccA family. Acetyl-CoA carboxylase is a heterohexamer composed of biotin carboxyl carrier protein (AccB), biotin carboxylase (AccC) and two subunits each of ACCase subunit alpha (AccA) and ACCase subunit beta (AccD).

The protein localises to the cytoplasm. It carries out the reaction N(6)-carboxybiotinyl-L-lysyl-[protein] + acetyl-CoA = N(6)-biotinyl-L-lysyl-[protein] + malonyl-CoA. It participates in lipid metabolism; malonyl-CoA biosynthesis; malonyl-CoA from acetyl-CoA: step 1/1. Functionally, component of the acetyl coenzyme A carboxylase (ACC) complex. First, biotin carboxylase catalyzes the carboxylation of biotin on its carrier protein (BCCP) and then the CO(2) group is transferred by the carboxyltransferase to acetyl-CoA to form malonyl-CoA. The protein is Acetyl-coenzyme A carboxylase carboxyl transferase subunit alpha of Aliivibrio fischeri (strain ATCC 700601 / ES114) (Vibrio fischeri).